Reading from the N-terminus, the 68-residue chain is Large ribosomal subunit protein bL35 (68 aa).

It belongs to the bacterial ribosomal protein bL35 family.

The protein is Large ribosomal subunit protein bL35 of Fusobacterium nucleatum subsp. nucleatum (strain ATCC 25586 / DSM 15643 / BCRC 10681 / CIP 101130 / JCM 8532 / KCTC 2640 / LMG 13131 / VPI 4355).